The chain runs to 404 residues: Sodium/glutamate symporter (404 aa).

The next 11 helical transmembrane spans lie at 5 to 25, 33 to 53, 69 to 89, 95 to 115, 161 to 181, 219 to 239, 245 to 265, 277 to 297, 307 to 327, 338 to 358, and 373 to 393; these read FSTY…YFLV, TFNI…LLIW, TTMM…SRLI, LVVF…IGIA, IAIA…GPVA, SLIE…YLDV, ALQL…RNIL, AIDV…LMSL, IDVL…AIFI, AVVL…TAIA, and AFLI…AALL.

This sequence belongs to the glutamate:Na(+) symporter (ESS) (TC 2.A.27) family.

It is found in the cell inner membrane. Catalyzes the sodium-dependent transport of glutamate. This Haemophilus influenzae (strain ATCC 51907 / DSM 11121 / KW20 / Rd) protein is Sodium/glutamate symporter.